The primary structure comprises 1370 residues: Insulin-like growth factor 1 receptor (1370 aa).

An N-terminal signal peptide occupies residues 1 to 30 (MKSGSGGGSPTSLWGLVFLSAALSLWPTSG). A disulfide bond links Cys-33 and Cys-52. N-linked (GlcNAc...) asparagine glycosylation is found at Asn-51, Asn-102, and Asn-135. Intrachain disulfides connect Cys-150/Cys-178, Cys-182/Cys-205, Cys-192/Cys-211, Cys-215/Cys-224, Cys-219/Cys-230, Cys-231/Cys-239, Cys-235/Cys-248, Cys-251/Cys-260, Cys-264/Cys-276, Cys-282/Cys-303, Cys-307/Cys-321, Cys-324/Cys-328, and Cys-332/Cys-354. N-linked (GlcNAc...) asparagine glycosylation occurs at Asn-245. An N-linked (GlcNAc...) asparagine glycan is attached at Asn-314. N-linked (GlcNAc...) asparagine glycosylation is found at Asn-418 and Asn-439. Cys-456 and Cys-489 are disulfide-bonded. Fibronectin type-III domains are found at residues 490 to 610 (ESDV…TNAS) and 611 to 709 (VPSI…TEAE). Residues Asn-535, Asn-608, Asn-623, Asn-641, Asn-748, Asn-757, Asn-765, Asn-901, and Asn-914 are each glycosylated (N-linked (GlcNAc...) asparagine). Residues 742–936 (DVLQVANTTM…AKTTYENFMH (195 aa)) lie on the Extracellular side of the membrane. One can recognise a Fibronectin type-III 3 domain in the interval 835–928 (IPGPVTWEPR…DPVFFYVPAK (94 aa)). The helical transmembrane segment at 937–960 (LIIALPVAILLIVGGLVIMLYVFH) threads the bilayer. The Cytoplasmic segment spans residues 961-1370 (RKRNNSRLGN…ALPLPQSSTC (410 aa)). The IRS1- and SHC1-binding signature appears at 978-981 (NPEY). The residue at position 981 (Tyr-981) is a Phosphotyrosine. The region spanning 1000–1275 (ITMNRELGQG…SIKDEMEPSF (276 aa)) is the Protein kinase domain. ATP-binding positions include 1006–1014 (LGQGSFGMV) and Lys-1034. The Proton acceptor role is filled by Asp-1136. Phosphotyrosine; by autocatalysis is present on residues Tyr-1162, Tyr-1166, and Tyr-1167. Glycyl lysine isopeptide (Lys-Gly) (interchain with G-Cter in ubiquitin) cross-links involve residues Lys-1169 and Lys-1172. Ser-1279 bears the Phosphoserine; by GSK3-beta mark. Ser-1283 is subject to Phosphoserine. The interval 1304 to 1370 (NMESVPLDPS…ALPLPQSSTC (67 aa)) is disordered. Low complexity predominate over residues 1305-1321 (MESVPLDPSASSASLPL). A compositionally biased stretch (basic and acidic residues) spans 1322-1331 (PERHSGHKAE).

It belongs to the protein kinase superfamily. Tyr protein kinase family. Insulin receptor subfamily. As to quaternary structure, tetramer of 2 alpha and 2 beta chains linked by disulfide bonds. The alpha chains contribute to the formation of the ligand-binding domain, while the beta chain carries the kinase domain. Interacts with PIK3R1 and with the PTB/PID domains of IRS1 and SHC1 in vitro when autophosphorylated on tyrosine residues. Forms a hybrid receptor with INSR, the hybrid is a tetramer consisting of 1 alpha chain and 1 beta chain of INSR and 1 alpha chain and 1 beta chain of IGF1R. Interacts with ARRB1 and ARRB2. Interacts with GRB10. Interacts with RACK1. Interacts with SOCS1, SOCS2 and SOCS3. Interacts with 14-3-3 proteins. Interacts with NMD2. Interacts with MAP3K5. Interacts with STAT3. Found in a ternary complex with IGF1 and ITGAV:ITGB3 or ITGA6:ITGB4. Interacts (nascent precursor form) with ZFAND2B. Post-translationally, autophosphorylated on tyrosine residues in response to ligand binding. Autophosphorylation occurs in trans, i.e. one subunit of the dimeric receptor phosphorylates tyrosine residues on the other subunit. Autophosphorylation occurs in a sequential manner; Tyr-1166 is predominantly phosphorylated first, followed by phosphorylation of Tyr-1162 and Tyr-1167. While every single phosphorylation increases kinase activity, all three tyrosine residues in the kinase activation loop (Tyr-1162, Tyr-1166 and Tyr-1167) have to be phosphorylated for optimal activity. Can be autophosphorylated at additional tyrosine residues (in vitro). Autophosphorylated is followed by phosphorylation of juxtamembrane tyrosines and C-terminal serines. May also be phosphorylated at Tyr-1162 and Tyr-1167 by mTORC2. Phosphorylation of Tyr-981 is required for IRS1- and SHC1-binding. Phosphorylation of Ser-1279 by GSK-3beta restrains kinase activity and promotes cell surface expression, it requires a priming phosphorylation at Ser-1283. Dephosphorylated by PTPN1. In terms of processing, polyubiquitinated at Lys-1169 and Lys-1172 through both 'Lys-48' and 'Lys-29' linkages, promoting receptor endocytosis and subsequent degradation by the proteasome. Ubiquitination is facilitated by pre-existing phosphorylation. Sumoylated with SUMO1. Post-translationally, controlled by regulated intramembrane proteolysis (RIP). Undergoes metalloprotease-dependent constitutive ectodomain shedding to produce a membrane-anchored 52 kDa C-Terminal fragment which is further processed by presenilin gamma-secretase to yield an intracellular 50 kDa fragment.

It localises to the cell membrane. It carries out the reaction L-tyrosyl-[protein] + ATP = O-phospho-L-tyrosyl-[protein] + ADP + H(+). Its activity is regulated as follows. Activated by autophosphorylation at Tyr-1162, Tyr-1166 and Tyr-1167 on the kinase activation loop; phosphorylation at all three tyrosine residues is required for optimal kinase activity. Inhibited by MSC1609119A-1, BMS-754807, PQIP, benzimidazole pyridinone, isoquinolinedione, bis-azaindole, 3-cyanoquinoline, 2,4-bis-arylamino-1,3-pyrimidine, pyrrolopyrimidine, pyrrole-5-carboxaldehyde, picropodophyllin (PPP), tyrphostin derivatives. While most inhibitors bind to the ATP binding pocket, MSC1609119A-1 functions as allosteric inhibitor and binds close to the DFG motif and the activation loop. Dephosphorylated by PTPN1. Functionally, receptor tyrosine kinase which mediates actions of insulin-like growth factor 1 (IGF1). Binds IGF1 with high affinity and IGF2 and insulin (INS) with a lower affinity. The activated IGF1R is involved in cell growth and survival control. IGF1R is crucial for tumor transformation and survival of malignant cell. Ligand binding activates the receptor kinase, leading to receptor autophosphorylation, and tyrosines phosphorylation of multiple substrates, that function as signaling adapter proteins including, the insulin-receptor substrates (IRS1/2), Shc and 14-3-3 proteins. Phosphorylation of IRSs proteins lead to the activation of two main signaling pathways: the PI3K-AKT/PKB pathway and the Ras-MAPK pathway. The result of activating the MAPK pathway is increased cellular proliferation, whereas activating the PI3K pathway inhibits apoptosis and stimulates protein synthesis. Phosphorylated IRS1 can activate the 85 kDa regulatory subunit of PI3K (PIK3R1), leading to activation of several downstream substrates, including protein AKT/PKB. AKT phosphorylation, in turn, enhances protein synthesis through mTOR activation and triggers the antiapoptotic effects of IGFIR through phosphorylation and inactivation of BAD. In parallel to PI3K-driven signaling, recruitment of Grb2/SOS by phosphorylated IRS1 or Shc leads to recruitment of Ras and activation of the ras-MAPK pathway. In addition to these two main signaling pathways IGF1R signals also through the Janus kinase/signal transducer and activator of transcription pathway (JAK/STAT). Phosphorylation of JAK proteins can lead to phosphorylation/activation of signal transducers and activators of transcription (STAT) proteins. In particular activation of STAT3, may be essential for the transforming activity of IGF1R. The JAK/STAT pathway activates gene transcription and may be responsible for the transforming activity. JNK kinases can also be activated by the IGF1R. IGF1 exerts inhibiting activities on JNK activation via phosphorylation and inhibition of MAP3K5/ASK1, which is able to directly associate with the IGF1R. When present in a hybrid receptor with INSR, binds IGF1. The sequence is that of Insulin-like growth factor 1 receptor (Igf1r) from Rattus norvegicus (Rat).